The sequence spans 92 residues: UPF0297 protein TTE1249 (92 aa).

It belongs to the UPF0297 family.

This chain is UPF0297 protein TTE1249, found in Caldanaerobacter subterraneus subsp. tengcongensis (strain DSM 15242 / JCM 11007 / NBRC 100824 / MB4) (Thermoanaerobacter tengcongensis).